We begin with the raw amino-acid sequence, 200 residues long: Putative biotin transporter BioYB (200 aa).

Helical transmembrane passes span 13–33 (LIGM…VAPF), 36–56 (VAGI…LLLG), 61–81 (AIAM…FAQF), 90–110 (GKSG…GWFL), 121–141 (FLIA…TYMY), and 158–178 (WGFM…LSFI).

Belongs to the BioY family.

It localises to the cell membrane. Putative biotin transporter. This Bacillus subtilis (strain 168) protein is Putative biotin transporter BioYB (bioYB).